Reading from the N-terminus, the 772-residue chain is Magnetosome formation protease MamE (772 aa).

Residues 1–21 (MTMFNGDVEDGGRSNVSCGKD) are Cytoplasmic-facing. A helical membrane pass occupies residues 22–42 (LKRYLMLMGVVALVVLFGAFI). Residues 43-772 (YRQSSGGLRL…RNGQEFWIVL (730 aa)) lie on the Lumenal side of the membrane. Active-site charge relay system residues include histidine 187, aspartate 220, and serine 296. The MCR (magnetochrome) 1 signature appears at 374 to 397 (IAAGTPSPHVDGRQNMDCSNCHDI). Heme is bound by residues cysteine 391, cysteine 394, histidine 395, cysteine 437, cysteine 440, histidine 441, cysteine 488, cysteine 491, and histidine 492. 2 consecutive short sequence motifs (MCR) follow at residues 420-443 (IPAN…CHQF) and 470-494 (AIRA…CHQI). The Cytochrome c domain maps to 445-558 (GGAAAGPIAF…ALTPLTQRLG (114 aa)). PDZ domains are found at residues 522 to 626 (AINI…LRAG) and 696 to 765 (GATP…HRNG).

In the N-terminal section; belongs to the peptidase S1C family. Might interact with MamB via PDZ1. Requires heme as cofactor. The protein isolated from magnetosome membranes has a molecular weight of about 36.3 kDa, probably due to C-terminal cleavage. Subject to autocatalytic cleavage; cleavage also requires MamO; these may be the same event.

It localises to the magnetosome membrane. Its function is as follows. Acts at 2 distinct steps of magnetosome formation; required for correct localization of proteins to the magnetosome while the protease activity is required for maturation of small magnetite crystals into larger, functional ones. Probably cleaves at least itself, MamO and MamP; cleavage requires the putative transprot domain of MamO. Involved in localization of some proteins (at least MamA, MamC, MamF, MamI and MamJ) to the magnetosome. One of 7 genes (mamLQBIEMO) able to induce magnetosome membrane biogenesis; coexpression of mamLQRBIEMO in a deletion of the 17 gene mamAB operon restores magnetosome vesicle formation but not magnetite biosynthesis. In Magnetospirillum gryphiswaldense (strain DSM 6361 / JCM 21280 / NBRC 15271 / MSR-1), this protein is Magnetosome formation protease MamE.